We begin with the raw amino-acid sequence, 500 residues long: Cytochrome P450 71B26 (500 aa).

A helical transmembrane segment spans residues 1-21; the sequence is MDSIWILSLLFFIIFLLLAAF. Residue Cys440 participates in heme binding.

Belongs to the cytochrome P450 family. It depends on heme as a cofactor.

The protein localises to the membrane. The polypeptide is Cytochrome P450 71B26 (CYP71B26) (Arabidopsis thaliana (Mouse-ear cress)).